Here is a 117-residue protein sequence, read N- to C-terminus: Hemerythrin subunit alpha (117 aa).

Fe cation-binding residues include H24, H53, E57, H72, H76, H105, and D110.

This sequence belongs to the hemerythrin family. Octamer composed of two types of chains: alpha and beta.

Its function is as follows. Hemerythrin is a respiratory protein in blood cells of certain marine worms. The oxygen-binding site in each chain contains two iron atoms. This chain is Hemerythrin subunit alpha, found in Lingula reevii (Inarticulated brachiopod).